Consider the following 891-residue polypeptide: Mating-type protein A-alpha Y1 (891 aa).

The segment at residues 146-205 (SKKPRPKFHSEYTPLLELYFRFNAYPTYADRRVLAEKTGMLTRQITVWFQNHRRRAKGPL) is a DNA-binding region (homeobox). Disordered regions lie at residues 241–291 (PITL…PSTL), 319–339 (DIEMKDSSKPKRRKMKKLPKG), 393–437 (TRKP…RRVS), 610–718 (ARRK…EQSL), and 800–822 (MNWTASVGSNAQDPASQESGGDE). Over residues 244 to 257 (LGNNKTPDLTTSSR) the composition is skewed to polar residues. Over residues 328–337 (PKRRKMKKLP) the composition is skewed to basic residues. Residues 427 to 437 (ASSTVPSRRVS) show a composition bias toward low complexity. Residues 627–638 (KKDKKERKKAGL) show a composition bias toward basic residues. Composition is skewed to low complexity over residues 651-667 (VSSRASSLDSDVSTSAR) and 676-710 (QPSSSSRASSVASSGRTPSLSSTSSRRSSGMSMPS). The segment covering 800–818 (MNWTASVGSNAQDPASQES) has biased composition (polar residues).

It localises to the nucleus. Functionally, specifies A-alpha-1 mating-type. May regulate the expression of genes specific to the homokaryotic cell type. The chain is Mating-type protein A-alpha Y1 from Schizophyllum commune (Split gill fungus).